The following is a 719-amino-acid chain: Translation initiation factor IF-2 (719 aa).

Positions 54-67 (NKEETKPNVDEKPP) are enriched in basic and acidic residues. 2 disordered regions span residues 54–75 (NKEETKPNVDEKPPNQDTLTDN) and 97–122 (STKNVTPNGNNKKDKKKKNKKDKRKN). Residues 109–122 (KDKKKKNKKDKRKN) are compositionally biased toward basic residues. In terms of domain architecture, tr-type G spans 221 to 390 (HRSPVVTVMG…LLVSEMSELK (170 aa)). The G1 stretch occupies residues 230 to 237 (GHVDHGKT). Position 230–237 (230–237 (GHVDHGKT)) interacts with GTP. Residues 255 to 259 (GITQH) form a G2 region. Positions 276 to 279 (DTPG) are G3. GTP contacts are provided by residues 276 to 280 (DTPGH) and 330 to 333 (NKMD). Positions 330–333 (NKMD) are G4. Residues 366 to 368 (SAR) are G5.

It belongs to the TRAFAC class translation factor GTPase superfamily. Classic translation factor GTPase family. IF-2 subfamily.

It is found in the cytoplasm. In terms of biological role, one of the essential components for the initiation of protein synthesis. Protects formylmethionyl-tRNA from spontaneous hydrolysis and promotes its binding to the 30S ribosomal subunits. Also involved in the hydrolysis of GTP during the formation of the 70S ribosomal complex. The chain is Translation initiation factor IF-2 from Alkaliphilus oremlandii (strain OhILAs) (Clostridium oremlandii (strain OhILAs)).